A 334-amino-acid chain; its full sequence is Ornithine carbamoyltransferase (334 aa).

Residues 57 to 60 (STRT), glutamine 84, arginine 108, and 135 to 138 (HPTQ) contribute to the carbamoyl phosphate site. Residues asparagine 169, aspartate 233, and 237 to 238 (SM) contribute to the L-ornithine site. Residues 275-276 (CL) and arginine 320 contribute to the carbamoyl phosphate site.

The protein belongs to the aspartate/ornithine carbamoyltransferase superfamily. OTCase family.

The protein localises to the cytoplasm. It catalyses the reaction carbamoyl phosphate + L-ornithine = L-citrulline + phosphate + H(+). It participates in amino-acid biosynthesis; L-arginine biosynthesis; L-arginine from L-ornithine and carbamoyl phosphate: step 1/3. Its function is as follows. Reversibly catalyzes the transfer of the carbamoyl group from carbamoyl phosphate (CP) to the N(epsilon) atom of ornithine (ORN) to produce L-citrulline. The sequence is that of Ornithine carbamoyltransferase from Vibrio vulnificus (strain YJ016).